A 217-amino-acid chain; its full sequence is Putative thymidylate synthase (217 aa).

C139 is a catalytic residue.

The protein belongs to the thymidylate synthase family. Archaeal-type ThyA subfamily. As to quaternary structure, monomer.

Its subcellular location is the cytoplasm. It functions in the pathway pyrimidine metabolism; dTTP biosynthesis. May catalyze the biosynthesis of dTMP using an unknown cosubstrate. The protein is Putative thymidylate synthase of Methanococcoides burtonii (strain DSM 6242 / NBRC 107633 / OCM 468 / ACE-M).